Consider the following 451-residue polypeptide: tRNA modification GTPase MnmE (451 aa).

The (6S)-5-formyl-5,6,7,8-tetrahydrofolate site is built by arginine 28, glutamate 85, and lysine 124. A TrmE-type G domain is found at 220–373 (GLYTVLVGPP…LKTRLRTLLL (154 aa)). Position 230 (asparagine 230) interacts with K(+). GTP-binding positions include 230-235 (NVGKSS), 249-255 (TDVPGTT), and 274-277 (DTAG). Mg(2+) is bound at residue serine 234. K(+) contacts are provided by threonine 249, valine 251, and threonine 254. Threonine 255 provides a ligand contact to Mg(2+). Lysine 451 is a (6S)-5-formyl-5,6,7,8-tetrahydrofolate binding site.

This sequence belongs to the TRAFAC class TrmE-Era-EngA-EngB-Septin-like GTPase superfamily. TrmE GTPase family. As to quaternary structure, homodimer. Heterotetramer of two MnmE and two MnmG subunits. K(+) is required as a cofactor.

It is found in the cytoplasm. Its function is as follows. Exhibits a very high intrinsic GTPase hydrolysis rate. Involved in the addition of a carboxymethylaminomethyl (cmnm) group at the wobble position (U34) of certain tRNAs, forming tRNA-cmnm(5)s(2)U34. In Xylella fastidiosa (strain Temecula1 / ATCC 700964), this protein is tRNA modification GTPase MnmE.